The chain runs to 452 residues: Pup--protein ligase (452 aa).

Glutamate 9 provides a ligand contact to Mg(2+). Arginine 53 provides a ligand contact to ATP. Tyrosine 55 lines the Mg(2+) pocket. Aspartate 57 (proton acceptor) is an active-site residue. Glutamate 63 serves as a coordination point for Mg(2+). ATP contacts are provided by threonine 66 and tryptophan 419.

The protein belongs to the Pup ligase/Pup deamidase family. Pup-conjugating enzyme subfamily.

The enzyme catalyses ATP + [prokaryotic ubiquitin-like protein]-L-glutamate + [protein]-L-lysine = ADP + phosphate + N(6)-([prokaryotic ubiquitin-like protein]-gamma-L-glutamyl)-[protein]-L-lysine.. It functions in the pathway protein degradation; proteasomal Pup-dependent pathway. It participates in protein modification; protein pupylation. Functionally, catalyzes the covalent attachment of the prokaryotic ubiquitin-like protein modifier Pup to the proteasomal substrate proteins, thereby targeting them for proteasomal degradation. This tagging system is termed pupylation. The ligation reaction involves the side-chain carboxylate of the C-terminal glutamate of Pup and the side-chain amino group of a substrate lysine. This Frankia alni (strain DSM 45986 / CECT 9034 / ACN14a) protein is Pup--protein ligase.